A 322-amino-acid polypeptide reads, in one-letter code: Hydrolase C26A3.11 (322 aa).

One can recognise a CN hydrolase domain in the interval 44–290 (FRIGLVQLAN…PSIVYADIDP (247 aa)). Residue E83 is the Proton acceptor of the active site. Catalysis depends on K154, which acts as the Proton donor. Residue C195 is the Nucleophile of the active site.

The protein belongs to the carbon-nitrogen hydrolase superfamily. NIT1/NIT2 family.

This Schizosaccharomyces pombe (strain 972 / ATCC 24843) (Fission yeast) protein is Hydrolase C26A3.11.